Reading from the N-terminus, the 306-residue chain is Triplex capsid protein 2 (306 aa).

It belongs to the herpesviridae TRX2 protein family. As to quaternary structure, interacts with TRX1 and major capisd protein/MCP.

It is found in the virion. The protein resides in the host nucleus. Functionally, structural component of the T=16 icosahedral capsid. The capsid is composed of pentamers and hexamers of major capsid protein/MCP, which are linked together by heterotrimers called triplexes. These triplexes are formed by a single molecule of triplex protein 1/TRX1 and two copies of triplex protein 2/TRX2. Additionally, TRX1 is required for efficient transport of TRX2 to the nucleus, which is the site of capsid assembly. The protein is Triplex capsid protein 2 of Human cytomegalovirus (strain AD169) (HHV-5).